Reading from the N-terminus, the 81-residue chain is Photosystem I iron-sulfur center (81 aa).

4Fe-4S ferredoxin-type domains follow at residues 2–31 (AHSV…MIPW) and 39–68 (IASA…VRVY). [4Fe-4S] cluster is bound by residues cysteine 11, cysteine 14, cysteine 17, cysteine 21, cysteine 48, cysteine 51, cysteine 54, and cysteine 58.

In terms of assembly, the eukaryotic PSI reaction center is composed of at least 11 subunits. [4Fe-4S] cluster serves as cofactor.

It is found in the plastid. The protein resides in the chloroplast thylakoid membrane. It carries out the reaction reduced [plastocyanin] + hnu + oxidized [2Fe-2S]-[ferredoxin] = oxidized [plastocyanin] + reduced [2Fe-2S]-[ferredoxin]. Its function is as follows. Apoprotein for the two 4Fe-4S centers FA and FB of photosystem I (PSI); essential for photochemical activity. FB is the terminal electron acceptor of PSI, donating electrons to ferredoxin. The C-terminus interacts with PsaA/B/D and helps assemble the protein into the PSI complex. Required for binding of PsaD and PsaE to PSI. PSI is a plastocyanin-ferredoxin oxidoreductase, converting photonic excitation into a charge separation, which transfers an electron from the donor P700 chlorophyll pair to the spectroscopically characterized acceptors A0, A1, FX, FA and FB in turn. In Zygnema circumcarinatum (Green alga), this protein is Photosystem I iron-sulfur center.